The primary structure comprises 1015 residues: DNA polymerase catalytic subunit (1015 aa).

The protein belongs to the DNA polymerase type-B family. In terms of assembly, forms a complex with the major DNA-binding protein BALF2, the DNA polymerase processivity factor BMRF1, and the alkaline exonuclease BGLF5. Interacts with the putative helicase-primase complex composed of BBLF4, BSLF1 and BBLF2/3 proteins; these interactions may coordinate leading and lagging strand DNA synthesis at the replication fork.

The protein resides in the host nucleus. The enzyme catalyses DNA(n) + a 2'-deoxyribonucleoside 5'-triphosphate = DNA(n+1) + diphosphate. In terms of biological role, replicates viral genomic DNA in the late phase of lytic infection, producing long concatemeric DNA. The replication complex is composed of six viral proteins: the DNA polymerase, processivity factor, primase, primase-associated factor, helicase, and ssDNA-binding protein. This Homo sapiens (Human) protein is DNA polymerase catalytic subunit.